A 627-amino-acid polypeptide reads, in one-letter code: Protein fem-1 homolog B (627 aa).

4 ANK repeats span residues 45 to 74, 87 to 116, 120 to 149, and 153 to 182; these read QRST…VQTQ, DGAT…NVNH, TNST…NISI, and YDNT…DPNA. H185, C186, and H218 together coordinate Zn(2+). ANK repeat units follow at residues 186-215 and 218-248; these read CGAT…AIVV and HGMT…DRRS. One copy of the TPR repeat lies at 344-377; that stretch reads SHPIIYRGAVYADNMEFEQCIKLWLHALHLRQKG. ANK repeat units follow at residues 483–527 and 531–568; these read EGFT…EVNA and EGNS…HTDM.

The protein belongs to the fem-1 family. In terms of assembly, component of a CRL2 E3 ubiquitin-protein ligase complex, also named ECS (Elongin BC-CUL2/5-SOCS-box protein) complex, composed of CUL2, Elongin BC (ELOB and ELOC), RBX1 and substrate-specific adapter FEM1B. Homooligomer. Interacts with PPM1F and PHTF1. Interacts with the death domain of FAS/TNFRSF6 and TNFRSF1A. Interacts with CHEK1. Interacts with NKX3-1. In terms of tissue distribution, widely expressed. Highly expressed in testis. Weakly expressed in other tissues.

Its subcellular location is the cytoplasm. The protein localises to the nucleus. It participates in protein modification; protein ubiquitination. With respect to regulation, activity of the CRL2(FEM1B) complex toward FNIP1 is inhibited by BEX family proteins (BEX1, BEX2, BEX3, BEX4 and/or BEX5) in absence of reductive stress. Mechanistically, BEX proteins act as pseudosubstrate inhibitors that associate with FEM1B via zinc in absence of reductive stress, thereby preventing association between FEM1B and FNIP1. Its function is as follows. Substrate-recognition component of a Cul2-RING (CRL2) E3 ubiquitin-protein ligase complex of the DesCEND (destruction via C-end degrons) pathway, which recognizes a C-degron located at the extreme C terminus of target proteins, leading to their ubiquitination and degradation. The C-degron recognized by the DesCEND pathway is usually a motif of less than ten residues and can be present in full-length proteins, truncated proteins or proteolytically cleaved forms. The CRL2(FEM1B) complex specifically recognizes proteins ending with -Gly-Leu-Asp-Arg, such as CDK5R1, leading to their ubiquitination and degradation. Also acts as a regulator of the reductive stress response by mediating ubiquitination of reduced FNIP1: in response to reductive stress, the CRL2(FEM1B) complex specifically recognizes a conserved Cys degron in FNIP1 when this degron is reduced, leading to FNIP1 degradation and subsequent activation of mitochondria to recalibrate reactive oxygen species (ROS). Mechanistically, recognizes and binds reduced FNIP1 through two interface zinc ions, which act as a molecular glue that recruit reduced FNIP1 to FEM1B. Promotes ubiquitination of GLI1, suppressing GLI1 transcriptional activator activity. Promotes ubiquitination and degradation of ANKRD37. Promotes ubiquitination and degradation of SLBP. Involved in apoptosis by acting as a death receptor-associated protein that mediates apoptosis. Also involved in glucose homeostasis in pancreatic islet. May also act as an adapter/mediator in replication stress-induced signaling that leads to the activation of CHEK1. This chain is Protein fem-1 homolog B, found in Homo sapiens (Human).